The sequence spans 136 residues: MARTKQTARKSTGGKAPRKQLASKAARKSAPVSGGVKKPHRYKPGTVALREIRRFQKSTELLIRKLPFQRLVREIAQDFKSDLRFQSSAIGALQEAVEAYLVSLFEDTNLCAIHAKRVTIQKKDIQLARRLRGERS.

The tract at residues 1–42 is disordered; sequence MARTKQTARKSTGGKAPRKQLASKAARKSAPVSGGVKKPHRY. Lysine 5 bears the N6,N6,N6-trimethyllysine; alternate mark. N6,N6-dimethyllysine; alternate is present on lysine 5. N6-methyllysine; alternate is present on residues lysine 5 and lysine 10. Lysine 10 is subject to N6-acetyllysine; alternate. Serine 11 is subject to Phosphoserine. Position 15 is an N6,N6-dimethyllysine; alternate (lysine 15). N6-acetyllysine; alternate is present on residues lysine 15, lysine 19, lysine 24, lysine 28, and lysine 37. Residues lysine 19, lysine 24, lysine 28, and lysine 37 each carry the N6-methyllysine; alternate modification. An N6,N6,N6-trimethyllysine; alternate mark is found at lysine 28 and lysine 37. Lysine 28 and lysine 37 each carry N6,N6-dimethyllysine; alternate. N6-acetyllysine is present on residues lysine 57 and lysine 65. Lysine 80 is modified (N6,N6,N6-trimethyllysine; alternate). At lysine 80 the chain carries N6,N6-dimethyllysine; alternate. The residue at position 80 (lysine 80) is an N6-methyllysine; alternate.

The protein belongs to the histone H3 family. As to quaternary structure, the nucleosome is a histone octamer containing two molecules each of H2A, H2B, H3 and H4 assembled in one H3-H4 heterotetramer and two H2A-H2B heterodimers. The octamer wraps approximately 147 bp of DNA. In terms of processing, phosphorylated by IPL1 to form H3S10ph. H3S10ph promotes subsequent H3K14ac formation by GCN5 and is required for transcriptional activation through TBP recruitment to the promoters. Post-translationally, mono-, di- and trimethylated by the COMPASS complex to form H3K4me1/2/3. H3K4me activates gene expression by regulating transcription elongation and plays a role in telomere length maintenance. H3K4me enrichment correlates with transcription levels, and occurs in a 5' to 3' gradient with H3K4me3 enrichment at the 5'-end of genes, shifting to H3K4me2 and then H3K4me1. Methylated by SET2 to form H3K36me. H3K36me represses gene expression. Methylated by DOT1 to form H3K79me. H3K79me is required for association of SIR proteins with telomeric regions and for telomeric silencing. The COMPASS-mediated formation of H3K4me2/3 and the DOT1-mediated formation of H3K79me require H2BK123ub1. Acetylation of histone H3 leads to transcriptional activation. H3K14ac formation by GCN5 is promoted by H3S10ph. H3K14ac can also be formed by ESA1. H3K56ac formation occurs predominantly in newly synthesized H3 molecules during G1, S and G2/M of the cell cycle and may be involved in DNA repair.

The protein resides in the nucleus. The protein localises to the chromosome. Core component of nucleosome. Nucleosomes wrap and compact DNA into chromatin, limiting DNA accessibility to the cellular machineries which require DNA as a template. Histones thereby play a central role in transcription regulation, DNA repair, DNA replication and chromosomal stability. DNA accessibility is regulated via a complex set of post-translational modifications of histones, also called histone code, and nucleosome remodeling. This chain is Histone H3.3 (HHT3), found in Debaryomyces hansenii (strain ATCC 36239 / CBS 767 / BCRC 21394 / JCM 1990 / NBRC 0083 / IGC 2968) (Yeast).